Consider the following 167-residue polypeptide: uncharacterized protein (167 aa).

This sequence to B.subtilis XkdI.

This is an uncharacterized protein from Bacillus subtilis (strain 168).